The sequence spans 514 residues: 2-isopropylmalate synthase (514 aa).

The Pyruvate carboxyltransferase domain maps to Leu5–Val267. Mn(2+) is bound by residues Asp14, His202, His204, and Asn238. Positions Lys393–Val514 are regulatory domain.

Belongs to the alpha-IPM synthase/homocitrate synthase family. LeuA type 1 subfamily. In terms of assembly, homodimer. Mn(2+) serves as cofactor.

The protein resides in the cytoplasm. It carries out the reaction 3-methyl-2-oxobutanoate + acetyl-CoA + H2O = (2S)-2-isopropylmalate + CoA + H(+). It functions in the pathway amino-acid biosynthesis; L-leucine biosynthesis; L-leucine from 3-methyl-2-oxobutanoate: step 1/4. Catalyzes the condensation of the acetyl group of acetyl-CoA with 3-methyl-2-oxobutanoate (2-ketoisovalerate) to form 3-carboxy-3-hydroxy-4-methylpentanoate (2-isopropylmalate). The protein is 2-isopropylmalate synthase of Methylococcus capsulatus (strain ATCC 33009 / NCIMB 11132 / Bath).